We begin with the raw amino-acid sequence, 184 residues long: Chaperone protein dnaJ 72 (184 aa).

Residues 3–73 (DHYQVLGVTR…LKRASYNAGS (71 aa)) enclose the J domain. Residues 133 to 150 (FLLNLALAGGLYFAFTAI) form a helical membrane-spanning segment.

This sequence belongs to the DnaJ family. C/III subfamily.

The protein resides in the membrane. Its function is as follows. Plays a continuous role in plant development probably in the structural organization of compartments. The chain is Chaperone protein dnaJ 72 (ATJ72) from Arabidopsis thaliana (Mouse-ear cress).